Reading from the N-terminus, the 460-residue chain is Transcription factor AP-2-beta (460 aa).

Residue K21 forms a Glycyl lysine isopeptide (Lys-Gly) (interchain with G-Cter in SUMO) linkage. Positions 30 to 139 (HDGVPSHSSR…PQLSGLDPRR (110 aa)) are disordered. The span at 35–51 (SHSSRLSQLGSVSQGPY) shows a compositional bias: polar residues. Residues 121-132 (LLPQPRAALPQL) show a composition bias toward low complexity. Phosphoserine; by PKA is present on S258. The segment at 435-460 (NTTTNRHTSGEGPGSKTGDKEEKHRK) is disordered. The span at 451 to 460 (TGDKEEKHRK) shows a compositional bias: basic and acidic residues.

The protein belongs to the AP-2 family. Binds DNA as a dimer. Can form homodimers or heterodimers with other AP-2 family members. Interacts with CITED4. Interacts with UBE2I. Interacts with KCTD1; this interaction represses transcription activation. Interacts with CITED2 (via C-terminus); the interaction stimulates TFAP2B-transcriptional activity. In terms of processing, sumoylated on Lys-21; which inhibits transcriptional activity.

The protein localises to the nucleus. Its function is as follows. Sequence-specific DNA-binding protein that interacts with inducible viral and cellular enhancer elements to regulate transcription of selected genes. AP-2 factors bind to the consensus sequence 5'-GCCNNNGGC-3' and activate genes involved in a large spectrum of important biological functions including proper eye, face, body wall, limb and neural tube development. They also suppress a number of genes including MCAM/MUC18, C/EBP alpha and MYC. AP-2-beta appears to be required for normal face and limb development and for proper terminal differentiation and function of renal tubular epithelia. In Canis lupus familiaris (Dog), this protein is Transcription factor AP-2-beta (TFAP2B).